A 217-amino-acid chain; its full sequence is Large ribosomal subunit protein uL4 (217 aa).

The disordered stretch occupies residues 46–102; sequence KRQGTHSAKTRAEVSGGGRKPFRQKGTGRARQGSIRAPHFTGGGISHGPKPRDYSQR.

This sequence belongs to the universal ribosomal protein uL4 family. Part of the 50S ribosomal subunit.

Its function is as follows. One of the primary rRNA binding proteins, this protein initially binds near the 5'-end of the 23S rRNA. It is important during the early stages of 50S assembly. It makes multiple contacts with different domains of the 23S rRNA in the assembled 50S subunit and ribosome. In terms of biological role, forms part of the polypeptide exit tunnel. The chain is Large ribosomal subunit protein uL4 from Corynebacterium diphtheriae (strain ATCC 700971 / NCTC 13129 / Biotype gravis).